Consider the following 83-residue polypeptide: MPQIGLPRLVEIIRECAGDPDERDLDGDILDVTYQDLGYDSIALLEISAKLEQDLGVSIPGEELKTPRHTLHLVNTETAGEVA.

The 81-residue stretch at 3-83 (QIGLPRLVEI…VNTETAGEVA (81 aa)) folds into the Carrier domain. Residue S41 is modified to O-(pantetheine 4'-phosphoryl)serine.

As to quaternary structure, the tetracenomycin polyketide synthase (TCM PKS) is composed of a ketosynthase complex (TcmKL), an acyl carrier protein (TcmM), a cyclase (TcmN) and a probable second cyclase (TcmJ). It depends on pantetheine 4'-phosphate as a cofactor. 4'-phosphopantetheine is transferred from CoA to a specific serine of apo-ACP.

The catalysed reaction is 10 malonyl-CoA + 8 H(+) = tetracenomycin F2 + 10 CO2 + 10 CoA + 2 H2O. It functions in the pathway antibiotic biosynthesis; tetracenomycin C biosynthesis. In terms of biological role, involved in the biosynthesis of tetracenomycin C (TCM C). Part of a type II polyketide synthase (PKS) that catalyzes the synthesis of tetracenomycin F2 (TCM F2), a precursor of TCM C, from malonyl-CoA. TcmM is an acyl carrier protein that serves as an acceptor of malonate from malonyl-CoA and acts as the tether for the substrates and intermediates of polyketide assembly. The malonyl CoA-acyl carrier protein transacylase FabD (MCT) is required to catalyze the transacylation between malonyl-CoA and TcmM, although a relatively slow spontaneous self-malonylation of TcmM also occurs in a reaction without the MCT. The chain is Tetracenomycin polyketide synthase acyl carrier protein from Streptomyces glaucescens.